A 215-amino-acid chain; its full sequence is 3-isopropylmalate dehydratase small subunit (215 aa).

Belongs to the LeuD family. LeuD type 1 subfamily. Heterodimer of LeuC and LeuD.

It catalyses the reaction (2R,3S)-3-isopropylmalate = (2S)-2-isopropylmalate. It participates in amino-acid biosynthesis; L-leucine biosynthesis; L-leucine from 3-methyl-2-oxobutanoate: step 2/4. Catalyzes the isomerization between 2-isopropylmalate and 3-isopropylmalate, via the formation of 2-isopropylmaleate. The chain is 3-isopropylmalate dehydratase small subunit from Saccharophagus degradans (strain 2-40 / ATCC 43961 / DSM 17024).